Consider the following 116-residue polypeptide: Small ribosomal subunit protein uS13 (116 aa).

The interval 88-116 (GSRHKKGLPVRGQHTKNNARTRKGPRKQA) is disordered.

This sequence belongs to the universal ribosomal protein uS13 family. Part of the 30S ribosomal subunit. Forms a loose heterodimer with protein S19. Forms two bridges to the 50S subunit in the 70S ribosome.

In terms of biological role, located at the top of the head of the 30S subunit, it contacts several helices of the 16S rRNA. In the 70S ribosome it contacts the 23S rRNA (bridge B1a) and protein L5 of the 50S subunit (bridge B1b), connecting the 2 subunits; these bridges are implicated in subunit movement. Contacts the tRNAs in the A and P-sites. The polypeptide is Small ribosomal subunit protein uS13 (Finegoldia magna (strain ATCC 29328 / DSM 20472 / WAL 2508) (Peptostreptococcus magnus)).